Reading from the N-terminus, the 330-residue chain is Phenylalanine--tRNA ligase alpha subunit (330 aa).

Glu-257 serves as a coordination point for Mg(2+).

Belongs to the class-II aminoacyl-tRNA synthetase family. Phe-tRNA synthetase alpha subunit type 1 subfamily. Tetramer of two alpha and two beta subunits. Mg(2+) is required as a cofactor.

The protein localises to the cytoplasm. It carries out the reaction tRNA(Phe) + L-phenylalanine + ATP = L-phenylalanyl-tRNA(Phe) + AMP + diphosphate + H(+). The protein is Phenylalanine--tRNA ligase alpha subunit of Acaryochloris marina (strain MBIC 11017).